The sequence spans 396 residues: Argininosuccinate synthase (396 aa).

ATP-binding positions include 10–18 (AYSGGLDTS) and Ala37. Residues Tyr88 and Ser93 each coordinate L-citrulline. Gly118 lines the ATP pocket. Positions 120, 124, and 125 each coordinate L-aspartate. Asn124 lines the L-citrulline pocket. Arg128, Ser176, Ser185, Glu261, and Tyr273 together coordinate L-citrulline.

Belongs to the argininosuccinate synthase family. Type 1 subfamily. As to quaternary structure, homotetramer.

Its subcellular location is the cytoplasm. It carries out the reaction L-citrulline + L-aspartate + ATP = 2-(N(omega)-L-arginino)succinate + AMP + diphosphate + H(+). It participates in amino-acid biosynthesis; L-arginine biosynthesis; L-arginine from L-ornithine and carbamoyl phosphate: step 2/3. The sequence is that of Argininosuccinate synthase from Nitratidesulfovibrio vulgaris (strain DP4) (Desulfovibrio vulgaris).